The primary structure comprises 180 residues: Ribosome maturation factor RimM (180 aa).

A PRC barrel domain is found at 97-169; sequence PGELSWDFFV…IITVDLPEGL (73 aa).

The protein belongs to the RimM family. In terms of assembly, binds ribosomal protein uS19.

Its subcellular location is the cytoplasm. An accessory protein needed during the final step in the assembly of 30S ribosomal subunit, possibly for assembly of the head region. Essential for efficient processing of 16S rRNA. May be needed both before and after RbfA during the maturation of 16S rRNA. It has affinity for free ribosomal 30S subunits but not for 70S ribosomes. This chain is Ribosome maturation factor RimM, found in Bacteroides fragilis (strain YCH46).